The sequence spans 236 residues: Ras-related protein RabY (236 aa).

18 to 25 (GDRKTGKT) serves as a coordination point for GTP. The short motif at 40–48 (YRQTNLLHF) is the Effector region element. Residues 66–70 (DSQAD) and 126–129 (NKSD) each bind GTP. The span at 192-225 (QQQQQQQQQQQQQQQQQQQQQQQQQQQQQQQHQQ) shows a compositional bias: low complexity. A disordered region spans residues 192–236 (QQQQQQQQQQQQQQQQQQQQQQQQQQQQQQQHQQSSKTKIGCLIQ). Cys233 is subject to Cysteine methyl ester. Residue Cys233 is the site of S-geranylgeranyl cysteine attachment. A propeptide spans 234–236 (LIQ) (removed in mature form).

This sequence belongs to the small GTPase superfamily. Rab family.

Its subcellular location is the cell membrane. The protein is Ras-related protein RabY (rabY) of Dictyostelium discoideum (Social amoeba).